The sequence spans 262 residues: MAGTTAEYISHHLSFLASGDGFWAVHLDTLFFSLLAGVIFLFVFSRVAKNATSGVPGKLQCFVEIVIGWVDGLVKDNFHGPRNVIAPLALTIFCWVFIMNAIDLVPVDFLPQLANMFGIHYLRAVPTADISATLGMSICVFFLILFYTVKSKGFGGLVKEYTLHPFNHWVFIPVNFILETVTLLAKPISLAFRLFGNMYAGELIFILIAVMYMADNFALQALGIPLHLVWAIFHILVITLQAFIFMMLTIVYLSIAYNKADH.

6 consecutive transmembrane segments (helical) span residues 24 to 44 (AVHL…LFVF), 84 to 104 (VIAP…AIDL), 129 to 149 (DISA…FYTV), 165 to 185 (PFNH…TLLA), 194 to 214 (LFGN…MYMA), and 228 to 248 (LVWA…FMML).

Belongs to the ATPase A chain family. As to quaternary structure, F-type ATPases have 2 components, CF(1) - the catalytic core - and CF(0) - the membrane proton channel. CF(1) has five subunits: alpha(3), beta(3), gamma(1), delta(1), epsilon(1). CF(0) has three main subunits: a(1), b(2) and c(9-12). The alpha and beta chains form an alternating ring which encloses part of the gamma chain. CF(1) is attached to CF(0) by a central stalk formed by the gamma and epsilon chains, while a peripheral stalk is formed by the delta and b chains.

It is found in the cell inner membrane. Key component of the proton channel; it plays a direct role in the translocation of protons across the membrane. This is ATP synthase subunit a from Actinobacillus pleuropneumoniae serotype 7 (strain AP76).